Reading from the N-terminus, the 292-residue chain is Nucleotide-binding protein SACE_2139 (292 aa).

Residue 15–22 (GLSGAGRS) coordinates ATP. 66 to 69 (DVRS) is a GTP binding site.

It belongs to the RapZ-like family.

Displays ATPase and GTPase activities. This chain is Nucleotide-binding protein SACE_2139, found in Saccharopolyspora erythraea (strain ATCC 11635 / DSM 40517 / JCM 4748 / NBRC 13426 / NCIMB 8594 / NRRL 2338).